The chain runs to 490 residues: Cis-aconitate decarboxylase (490 aa).

It belongs to the PrpD family.

Its subcellular location is the mitochondrion. The catalysed reaction is cis-aconitate + H(+) = itaconate + CO2. Its function is as follows. Involved in the production of itaconic acid, a soluble unsaturated dicarboxylic acid mainly produced from sugars. This chain is Cis-aconitate decarboxylase (cad1), found in Aspergillus terreus.